The chain runs to 466 residues: MSLPSRLPAILQAVMQGQPRALADSHYPRWHHAPVTGLMNDPNGFIEFAGRYHLFYQWNPLACDHTFKCWAHWSSIDLLHWQHEPIALMPDEEYDRNGCYSGSAVDNNGTLTLCYTGNVKFAEGGRTAWQCLATENADGTFRKIGPVLPLPEGYTGHVRDPKVWRHEDLWYMVLGAQDRQKRGKVLLFSSADLHQWTSMGEIAGHGINGLDDVGYMWECPDLFPLGDQHILICCPQGIAREEECYLNTYPAVWMAGEFDYAAGAFRHGELHELDAGFEFYAPQTMLTSDGRRLLVGWMGVPEGEEMLQPTLNNGWIHQMTCLRELEFINGQLYQRPLRELSALRGEANGWSGNALPLAPMEIDLQTRGGDMLSLDFGGVLTLECDASGLRLARRSLASDEMHYRYWRGNVRSLRVFIDQSSVEIFINGGEGVMSSRYFPACSGQLTFSGITPDAFCYWPLRTCMVE.

Substrate-binding positions include 38–41, Gln57, 100–101, 159–160, and Glu218; these read LMND, YS, and RD. Asp41 is an active-site residue.

The protein belongs to the glycosyl hydrolase 32 family.

Its subcellular location is the cytoplasm. The catalysed reaction is Hydrolysis of terminal non-reducing beta-D-fructofuranoside residues in beta-D-fructofuranosides.. It functions in the pathway glycan biosynthesis; sucrose metabolism. Its function is as follows. Enables the bacterium to metabolize sucrose as a sole carbon source. This chain is Sucrose-6-phosphate hydrolase (scrB), found in Salmonella typhimurium.